The primary structure comprises 493 residues: Galactose-1-phosphate uridylyltransferase (493 aa).

The protein belongs to the galactose-1-phosphate uridylyltransferase type 2 family.

It localises to the cytoplasm. It carries out the reaction alpha-D-galactose 1-phosphate + UDP-alpha-D-glucose = alpha-D-glucose 1-phosphate + UDP-alpha-D-galactose. The protein operates within carbohydrate metabolism; galactose metabolism. The protein is Galactose-1-phosphate uridylyltransferase of Streptococcus thermophilus (strain ATCC BAA-250 / LMG 18311).